A 98-amino-acid chain; its full sequence is Peptides MS9.1 (98 aa).

Residues 1 to 21 (MKQSLILAVLCLALVFATIEA) form the signal peptide. Residues 22 to 27 (KPKADP) constitute a propeptide that is removed on maturation. 2 disulfide bridges follow: Cys34-Cys46 and Cys37-Cys52. Propeptides lie at residues 63 to 64 (DP) and 92 to 98 (DPVRDAE).

Belongs to the sea anemone BBH family.

The protein localises to the secreted. The protein resides in the nematocyst. In terms of biological role, acts as a positive modulator of mammalian TRPA1, a non-selective cation channel involved in detection of pain, in vitro yet has an analgesic and anti-inflammatory effect in vivo. The protein is Peptides MS9.1 of Metridium senile (Brown sea anemone).